The chain runs to 122 residues: uncharacterized protein (122 aa).

An N-terminal signal peptide occupies residues 1 to 35 (MCCYVGKATKIFLCLAAALIVVGLVLGFGLAHRTW). A disordered region spans residues 55–83 (YGGGGGGGDPLPATSGAGDTPPGVPLTEP).

This is an uncharacterized protein from Oryza sativa subsp. japonica (Rice).